Consider the following 411-residue polypeptide: Copper resistance protein CRF1 (411 aa).

The copper-fist DNA-binding region spans 1 to 40 (MVVIEGIKYACERCIRGHRVSSCTHTQQPLIRIKPKGRPA). Positions 11, 14, 23, and 25 each coordinate Zn(2+). Composition is skewed to low complexity over residues 115–190 (QQQA…PHSP), 205–214 (SSSSLSSLHS), 227–241 (SHNSLSAASQLANSP), and 350–370 (SVAANPSASASASSIQTPPSS). 2 disordered regions span residues 115–241 (QQQA…ANSP) and 348–389 (EMSV…VSPA).

It is found in the nucleus. In terms of biological role, transcriptional regulator involved in resistance to high copper concentration. The sequence is that of Copper resistance protein CRF1 (CRF1) from Yarrowia lipolytica (strain CLIB 122 / E 150) (Yeast).